The chain runs to 96 residues: Large ribosomal subunit protein bL21 (96 aa).

The span at 73-84 (KRRKRYQSRNGH) shows a compositional bias: basic residues. The disordered stretch occupies residues 73–96 (KRRKRYQSRNGHRQQMTQIEVVSL). Residues 85-96 (RQQMTQIEVVSL) show a composition bias toward polar residues.

The protein belongs to the bacterial ribosomal protein bL21 family. Part of the 50S ribosomal subunit. Contacts protein L20.

Its function is as follows. This protein binds to 23S rRNA in the presence of protein L20. The polypeptide is Large ribosomal subunit protein bL21 (Chlorobium phaeovibrioides (strain DSM 265 / 1930) (Prosthecochloris vibrioformis (strain DSM 265))).